The following is a 333-amino-acid chain: Lipoyl synthase (333 aa).

Cys-56, Cys-61, Cys-67, Cys-82, Cys-86, Cys-89, and Ser-293 together coordinate [4Fe-4S] cluster. The region spanning 68–282 (WEDREATFLI…GRVGAELGFS (215 aa)) is the Radical SAM core domain. The disordered stretch occupies residues 301 to 333 (QQAMTARDQDRSEMSVPPESVSENSHGQRPSPW). The span at 314-325 (MSVPPESVSENS) shows a compositional bias: low complexity.

The protein belongs to the radical SAM superfamily. Lipoyl synthase family. [4Fe-4S] cluster is required as a cofactor.

The protein resides in the cytoplasm. It catalyses the reaction [[Fe-S] cluster scaffold protein carrying a second [4Fe-4S](2+) cluster] + N(6)-octanoyl-L-lysyl-[protein] + 2 oxidized [2Fe-2S]-[ferredoxin] + 2 S-adenosyl-L-methionine + 4 H(+) = [[Fe-S] cluster scaffold protein] + N(6)-[(R)-dihydrolipoyl]-L-lysyl-[protein] + 4 Fe(3+) + 2 hydrogen sulfide + 2 5'-deoxyadenosine + 2 L-methionine + 2 reduced [2Fe-2S]-[ferredoxin]. Its pathway is protein modification; protein lipoylation via endogenous pathway; protein N(6)-(lipoyl)lysine from octanoyl-[acyl-carrier-protein]: step 2/2. Catalyzes the radical-mediated insertion of two sulfur atoms into the C-6 and C-8 positions of the octanoyl moiety bound to the lipoyl domains of lipoate-dependent enzymes, thereby converting the octanoylated domains into lipoylated derivatives. This Frankia casuarinae (strain DSM 45818 / CECT 9043 / HFP020203 / CcI3) protein is Lipoyl synthase.